We begin with the raw amino-acid sequence, 141 residues long: Large ribosomal subunit protein uL16 (141 aa).

This sequence belongs to the universal ribosomal protein uL16 family. In terms of assembly, part of the 50S ribosomal subunit.

Its function is as follows. Binds 23S rRNA and is also seen to make contacts with the A and possibly P site tRNAs. The protein is Large ribosomal subunit protein uL16 of Campylobacter lari (strain RM2100 / D67 / ATCC BAA-1060).